The following is a 265-amino-acid chain: Synaptoporin (265 aa).

At 1-4 (MCMV) the chain is on the cytoplasmic side. The MARVEL domain maps to 1–202 (MCMVIFAPLF…NIWFVFKETG (202 aa)). Residues 5-25 (IFAPLFAMFAFATCGGYSGGL) traverse the membrane as a helical segment. Topologically, residues 26–81 (RLSVDCVNKTESNLSIDIAFAYPFRLQQVTFEVPTCEGKEQQKLALVGDSSSSAEF) are vesicular. N-linked (GlcNAc...) asparagine glycans are attached at residues Asn-33 and Asn-38. Residues 82–102 (FVTVAVFAFLYSLAATVVYIF) traverse the membrane as a helical segment. The Cytoplasmic segment spans residues 103–114 (FQNKYRENNRGP). Residues 115–135 (LIDFIVTVVFSFLWLVGSSAW) form a helical membrane-spanning segment. Residues 136-177 (AKGLSDVKVATDPKEVLLLMSACKQPSNKCMAVHSPVMSSLN) lie on the Vesicular side of the membrane. The helical transmembrane segment at 178–198 (TSVVFGFLNFILWAGNIWFVF) threads the bilayer. Residues 199-265 (KETGWHSSGQ…SGPTSFNNQI (67 aa)) are Cytoplasmic-facing. 5 tandem repeats follow at residues 210 to 214 (YLSDP), 222 to 226 (YNQGR), 227 to 231 (YNQES), 232 to 236 (YGSSG), and 238 to 242 (YSQQA). Residues 210 to 242 (YLSDPMEKHSSSYNQGRYNQESYGSSGGYSQQA) form a 5 X approximate repeats region. Ser-212 is modified (phosphoserine). Over residues 221–230 (SYNQGRYNQE) the composition is skewed to polar residues. A disordered region spans residues 221–265 (SYNQGRYNQESYGSSGGYSQQANLGPTSDEFGQQPSGPTSFNNQI). Over residues 240-265 (QQANLGPTSDEFGQQPSGPTSFNNQI) the composition is skewed to polar residues.

This sequence belongs to the synaptophysin/synaptobrevin family.

It localises to the cytoplasmic vesicle. The protein resides in the secretory vesicle. The protein localises to the synaptic vesicle membrane. It is found in the synapse. Its subcellular location is the synaptosome. Intrinsic membrane protein of small synaptic vesicles. Probable vesicular channel protein. This is Synaptoporin (Synpr) from Mus musculus (Mouse).